The chain runs to 168 residues: Thiol peroxidase (168 aa).

Residues 19–168 (PQAGSKAQTF…YEAALAVLKA (150 aa)) form the Thioredoxin domain. The active-site Cysteine sulfenic acid (-SOH) intermediate is the C61. C61 and C95 form a disulfide bridge.

This sequence belongs to the peroxiredoxin family. Tpx subfamily. In terms of assembly, homodimer.

The catalysed reaction is a hydroperoxide + [thioredoxin]-dithiol = an alcohol + [thioredoxin]-disulfide + H2O. In terms of biological role, thiol-specific peroxidase that catalyzes the reduction of hydrogen peroxide and organic hydroperoxides to water and alcohols, respectively. Plays a role in cell protection against oxidative stress by detoxifying peroxides. The sequence is that of Thiol peroxidase from Shigella dysenteriae.